A 235-amino-acid polypeptide reads, in one-letter code: Myc target protein 1 (235 aa).

The short motif at 95–113 is the Bipartite nuclear localization signal element; it reads RRRRASAPISQWSSSRRSR. 4 positions are modified to phosphoserine: serine 135, serine 138, serine 141, and serine 149.

The protein belongs to the MYCT1 family. As to expression, down-regulated in gastric cancer tissues.

It localises to the nucleus. Functionally, may regulate certain MYC target genes, MYC seems to be a direct upstream transcriptional activator. Does not seem to significantly affect growth cell capacity. Overexpression seems to mediate many of the known phenotypic features associated with MYC, including promotion of apoptosis, alteration of morphology, enhancement of anchorage-independent growth, tumorigenic conversion, promotion of genomic instability, and inhibition of hematopoietic differentiation. The polypeptide is Myc target protein 1 (MYCT1) (Homo sapiens (Human)).